Reading from the N-terminus, the 250-residue chain is Anti-sigma-L factor RslA (250 aa).

Residues 1-115 (MTMPLRGLGP…VHRRRRRTRL (115 aa)) are Cytoplasmic-facing. Residues 116 to 136 (ITWVASSAAAAVLAIGVLVGV) form a helical membrane-spanning segment. At 137–250 (QGHSAAPQRA…TGQVLLQRSL (114 aa)) the chain is on the extracellular side.

In terms of assembly, interacts with ECF RNA polymerase sigma factor SigL; this should inhibit the interaction of SigL with the RNA polymerase catalytic core. In terms of processing, probably cleaved within the membrane by Rip1 near the cytoplasmic membrane interface.

The protein resides in the cell membrane. Its function is as follows. An anti-sigma factor for extracytoplasmic function (ECF) sigma factor SigL. ECF sigma factors are held in an inactive form by an anti-sigma factor until released by regulated intramembrane proteolysis (RIP). RIP occurs when an extracytoplasmic signal triggers a concerted proteolytic cascade to transmit information and elicit cellular responses. The membrane-spanning regulatory substrate protein is first cut extracytoplasmically (site-1 protease, S1P), then within the membrane itself (site-2 protease, S2P, Rip1), while cytoplasmic proteases finish degrading the regulatory protein, liberating the sigma factor. This Mycobacterium tuberculosis (strain ATCC 35801 / TMC 107 / Erdman) protein is Anti-sigma-L factor RslA (rslA).